We begin with the raw amino-acid sequence, 421 residues long: UDP-N-acetylglucosamine 1-carboxyvinyltransferase (421 aa).

26-27 contacts phosphoenolpyruvate; that stretch reads KN. Arg-96 provides a ligand contact to UDP-N-acetyl-alpha-D-glucosamine. Catalysis depends on Asp-120, which acts as the Proton donor. The UDP-N-acetyl-alpha-D-glucosamine site is built by Asp-308 and Val-330.

It belongs to the EPSP synthase family. MurA subfamily.

It is found in the cytoplasm. It catalyses the reaction phosphoenolpyruvate + UDP-N-acetyl-alpha-D-glucosamine = UDP-N-acetyl-3-O-(1-carboxyvinyl)-alpha-D-glucosamine + phosphate. Its pathway is cell wall biogenesis; peptidoglycan biosynthesis. Cell wall formation. Adds enolpyruvyl to UDP-N-acetylglucosamine. The protein is UDP-N-acetylglucosamine 1-carboxyvinyltransferase of Corynebacterium efficiens (strain DSM 44549 / YS-314 / AJ 12310 / JCM 11189 / NBRC 100395).